A 232-amino-acid polypeptide reads, in one-letter code: MGQKVNPIGLRLGINRNWESRWFPTKASLPENIGEDYKIRAFLKKKLYYAGISQILIERTAKKLRVTVVAARPGIIIGKKGQDVENLKNDVSKLIGKEVNVNIKEERKAQASAQLAAENVAMQLEKRVAFRRAMKKVIQGAQKSGAKGIKISVAGRLGGAEMARTEWYLEGRVPLHTLRAKIDYGVAEAHTTYGNIGIKVWIFKGEVLQKGVQPEKTEDDAPKKTRRPRRGK.

The region spanning 39–107 (IRAFLKKKLY…EVNVNIKEER (69 aa)) is the KH type-2 domain. The disordered stretch occupies residues 212–232 (VQPEKTEDDAPKKTRRPRRGK). Positions 213 to 223 (QPEKTEDDAPK) are enriched in basic and acidic residues.

The protein belongs to the universal ribosomal protein uS3 family. Part of the 30S ribosomal subunit. Forms a tight complex with proteins S10 and S14.

Its function is as follows. Binds the lower part of the 30S subunit head. Binds mRNA in the 70S ribosome, positioning it for translation. The chain is Small ribosomal subunit protein uS3 from Campylobacter curvus (strain 525.92).